Here is a 338-residue protein sequence, read N- to C-terminus: Methionine synthase (338 aa).

Zn(2+) is bound by residues H210, C212, E234, and C294.

The protein belongs to the archaeal MetE family. Requires Zn(2+) as cofactor.

It functions in the pathway amino-acid biosynthesis; L-methionine biosynthesis via de novo pathway. Its function is as follows. Catalyzes the transfer of a methyl group to L-homocysteine resulting in methionine formation. The physiological methyl donor is unknown. The sequence is that of Methionine synthase from Pyrococcus abyssi (strain GE5 / Orsay).